The chain runs to 522 residues: Sugar transport protein MST2 (522 aa).

At 1 to 24 the chain is on the cytoplasmic side; the sequence is MAAATAADVAEDTASVYSGKLTLY. A helical membrane pass occupies residues 25-45; sequence VFLTCGVAATGGLIIGYDIGI. The Extracellular portion of the chain corresponds to 46 to 82; sequence SGGVTSMDTFLGKFFPSVLHQEQTAQGTSQYCKFNSQ. A helical transmembrane segment spans residues 83 to 103; sequence PLTAFTSSLYLAALVASFFVA. Residues 104-111 lie on the Cytoplasmic side of the membrane; the sequence is SFTRALGR. Residues 112-132 form a helical membrane-spanning segment; the sequence is KWSMFGGGVSFLAGATLNGAA. At 133–134 the chain is on the extracellular side; sequence RN. Residues 135–155 form a helical membrane-spanning segment; sequence VAMLIVGRILLGIGVAFCGLS. Over 156–169 the chain is Cytoplasmic; sequence TPIYLSEMAPPRLR. A helical transmembrane segment spans residues 170 to 190; that stretch reads GMLNIGLQLMITVGIFSANLV. Residues 191 to 204 are Extracellular-facing; that stretch reads NYGAAKIRGGWGWR. A helical transmembrane segment spans residues 205-225; that stretch reads VSLGLAAAPACVIAVGSLFLP. Residues 226 to 291 lie on the Cytoplasmic side of the membrane; that stretch reads DSPSSLINRG…DVLQRRYRPQ (66 aa). Residues 292–312 form a helical membrane-spanning segment; the sequence is LAMAVLIPFFQQLTGINVIMF. Over 313-329 the chain is Extracellular; it reads YAPVLFKTIGLGGDASL. A helical membrane pass occupies residues 330–350; the sequence is MSAVITGLVNIVATFVSIATV. Topologically, residues 351–361 are cytoplasmic; sequence DSLGRRKLLFQ. The helical transmembrane segment at 362 to 382 threads the bilayer; that stretch reads GGCQMLVSQVIIGTLIGVVFG. The Extracellular portion of the chain corresponds to 383–391; it reads TSGDGNISR. The helical transmembrane segment at 392–412 threads the bilayer; that stretch reads ALAVCIVVFICVYVAGFAWSW. The Cytoplasmic portion of the chain corresponds to 413–434; the sequence is GPLGVLLPSEIFPLEVRPAGQS. A helical transmembrane segment spans residues 435–455; the sequence is ISVAVNMLCTFAVAEAFLPML. The Extracellular segment spans residues 456 to 459; sequence CHMR. Residues 460 to 480 traverse the membrane as a helical segment; that stretch reads FGLFYFFSGWVLVMTLFVSAF. Topologically, residues 481–522 are cytoplasmic; sequence LPETKGVPIEKMTVVWRTHWFWGRFYCNQDADAHVQVANSKV.

This sequence belongs to the major facilitator superfamily. Sugar transporter (TC 2.A.1.1) family.

The protein localises to the membrane. Its function is as follows. Mediates active uptake of hexoses by sugar:proton symport. Can transport glucose. The polypeptide is Sugar transport protein MST2 (Oryza sativa subsp. japonica (Rice)).